Reading from the N-terminus, the 237-residue chain is MKLTPASILEAPVYYADHIHGKYDVDKVVILRDCGYVSENEIMPQTLKLLPERTNIVDFTNNELEELPPLGHNDTVHTLLLSRNRLGRLDASRLPRYLVNLNLAMNRFEKFEQLQGLRSAPKTLKNLNLRGNVICHKEQYRETVIALCPQLAVLDGERVRQAERQAAPQNEKTDTPTEGPQPVALQATSEKELQLMDHVVNKMDKDTLEDIKQQLAKATTLAEIERLEKLLSGGVIQ.

LRR repeat units follow at residues 53–74, 75–95, and 97–118; these read RTNI…GHND, TVHT…SRLP, and YLVN…QGLR. The LRRCT domain maps to 132–170; it reads NVICHKEQYRETVIALCPQLAVLDGERVRQAERQAAPQN. Residues 161 to 182 form a disordered region; sequence QAERQAAPQNEKTDTPTEGPQP.

The protein belongs to the U2 small nuclear ribonucleoprotein A family. As to quaternary structure, associated with the spliceosome.

Its subcellular location is the nucleus. Involved in pre-mRNA splicing. The polypeptide is U2 small nuclear ribonucleoprotein A' (LEA1) (Eremothecium gossypii (strain ATCC 10895 / CBS 109.51 / FGSC 9923 / NRRL Y-1056) (Yeast)).